The primary structure comprises 285 residues: Protease HtpX homolog (285 aa).

Transmembrane regions (helical) follow at residues 7–27 (TAML…MIGG) and 30–50 (GMTI…WFSD). Residue His131 participates in Zn(2+) binding. The active site involves Glu132. Residue His135 coordinates Zn(2+). A run of 2 helical transmembrane segments spans residues 146 to 166 (ITAT…FFGG) and 177 to 197 (IAGI…QMAI). Glu202 provides a ligand contact to Zn(2+).

This sequence belongs to the peptidase M48B family. It depends on Zn(2+) as a cofactor.

It localises to the cell inner membrane. The sequence is that of Protease HtpX homolog from Burkholderia cenocepacia (strain HI2424).